A 60-amino-acid polypeptide reads, in one-letter code: MTQVVVGQNEPIESALRRFKRQVAKAGIYTDFKKHQFFETPQEKHKRKEATRRRQRSRRR.

Residues 36–60 form a disordered region; it reads QFFETPQEKHKRKEATRRRQRSRRR. A compositionally biased stretch (basic residues) spans 44–60; the sequence is KHKRKEATRRRQRSRRR.

The protein belongs to the bacterial ribosomal protein bS21 family.

In Synechocystis sp. (strain ATCC 27184 / PCC 6803 / Kazusa), this protein is Small ribosomal subunit protein bS21 (rpsU).